A 301-amino-acid polypeptide reads, in one-letter code: Small ribosomal subunit protein uS2 (301 aa).

It belongs to the universal ribosomal protein uS2 family. Component of the small ribosomal subunit. Mature ribosomes consist of a small (40S) and a large (60S) subunit. The 40S subunit contains about 33 different proteins and 1 molecule of RNA (18S). The 60S subunit contains about 49 different proteins and 3 molecules of RNA (28S, 5.8S and 5S). Interacts with ribosomal protein S21.

Its subcellular location is the cytoplasm. In terms of biological role, required for the assembly and/or stability of the 40S ribosomal subunit. Required for the processing of the 20S rRNA-precursor to mature 18S rRNA in a late step of the maturation of 40S ribosomal subunits. The sequence is that of Small ribosomal subunit protein uS2 from Brugia malayi (Filarial nematode worm).